Consider the following 762-residue polypeptide: Semaphorin-4A (762 aa).

Positions 1 to 32 are cleaved as a signal peptide; sequence MALPALGLDSWSFLGLFLFQLLLLFLPPATTA. Residues 33 to 684 are Extracellular-facing; sequence GREGQGPTPR…LAAPKSYWPH (652 aa). Residues 37–495 form the Sema domain; that stretch reads QGPTPRVKYH…FSGGIWKVPR (459 aa). Cysteine 114 and cysteine 125 are oxidised to a cystine. Asparagine 121 and asparagine 136 each carry an N-linked (GlcNAc...) asparagine glycan. Cystine bridges form between cysteine 143–cysteine 152, cysteine 270–cysteine 380, and cysteine 294–cysteine 340. Asparagine 314 and asparagine 497 each carry an N-linked (GlcNAc...) asparagine glycan. The PSI domain maps to 497 to 544; sequence NCSVYESCMDCVLARDPHCAWDPESQTCRLLPTPILKSWKQDMQQGNP. Cystine bridges form between cysteine 498–cysteine 515 and cysteine 507–cysteine 524. An Ig-like C2-type domain is found at 574–632; it reads NSILELPCPQSSALASYHWSHGVEAIPEAPSTVYNGSLLLLLRDGAGGLYQCWATENDF. A glycan (N-linked (GlcNAc...) asparagine) is linked at asparagine 608. A helical membrane pass occupies residues 685–705; the sequence is FLTVTVLLALVLSGALVTFLV. Residues 706-762 are Cytoplasmic-facing; sequence SPLGALRARGKVQGCGTLPSREKAPLSSEQCLQPSKEGRTSASDMDADNNLQGTEVA. The tract at residues 722–762 is disordered; the sequence is TLPSREKAPLSSEQCLQPSKEGRTSASDMDADNNLQGTEVA.

The protein belongs to the semaphorin family. Interacts with PLXNB1, PLXNB2, PLXNB3, PLXND1 and TIMD2.

It localises to the cell membrane. In terms of biological role, cell surface receptor for PLXNB1, PLXNB2, PLXNB3 and PLXND1 that plays an important role in cell-cell signaling. Regulates glutamatergic and GABAergic synapse development. Promotes the development of inhibitory synapses in a PLXNB1-dependent manner and promotes the development of excitatory synapses in a PLXNB2-dependent manner. Plays a role in priming antigen-specific T-cells, promotes differentiation of Th1 T-helper cells, and thereby contributes to adaptive immunity. Promotes phosphorylation of TIMD2. Inhibits angiogenesis. Promotes axon growth cone collapse. Inhibits axonal extension by providing local signals to specify territories inaccessible for growing axons. This is Semaphorin-4A (SEMA4A) from Bos taurus (Bovine).